Reading from the N-terminus, the 124-residue chain is Small ribosomal subunit protein eS6 (124 aa).

It belongs to the eukaryotic ribosomal protein eS6 family.

The sequence is that of Small ribosomal subunit protein eS6 from Methanococcus maripaludis (strain C6 / ATCC BAA-1332).